The chain runs to 88 residues: Small ribosomal subunit protein bS20 (88 aa).

This sequence belongs to the bacterial ribosomal protein bS20 family.

Binds directly to 16S ribosomal RNA. The protein is Small ribosomal subunit protein bS20 of Methylocella silvestris (strain DSM 15510 / CIP 108128 / LMG 27833 / NCIMB 13906 / BL2).